The following is a 140-amino-acid chain: Mediator of RNA polymerase II transcription subunit 21 (140 aa).

Positions Glu-52–Gln-130 form a coiled coil.

The protein belongs to the Mediator complex subunit 21 family. As to quaternary structure, component of the Mediator complex.

It is found in the nucleus. In terms of biological role, component of the Mediator complex, a coactivator involved in the regulated transcription of nearly all RNA polymerase II-dependent genes. Mediator functions as a bridge to convey information from gene-specific regulatory proteins to the basal RNA polymerase II transcription machinery. Mediator is recruited to promoters by direct interactions with regulatory proteins and serves as a scaffold for the assembly of a functional preinitiation complex with RNA polymerase II and the general transcription factors. In Yarrowia lipolytica (strain CLIB 122 / E 150) (Yeast), this protein is Mediator of RNA polymerase II transcription subunit 21 (SRB7).